The chain runs to 273 residues: 5-deoxy-glucuronate isomerase (273 aa).

This sequence belongs to the isomerase IolB family.

It catalyses the reaction 5-deoxy-D-glucuronate = 5-dehydro-2-deoxy-D-gluconate. It participates in polyol metabolism; myo-inositol degradation into acetyl-CoA; acetyl-CoA from myo-inositol: step 4/7. Its function is as follows. Involved in the isomerization of 5-deoxy-glucuronate (5DG) to 5-dehydro-2-deoxy-D-gluconate (DKG or 2-deoxy-5-keto-D-gluconate). This is 5-deoxy-glucuronate isomerase from Listeria innocua serovar 6a (strain ATCC BAA-680 / CLIP 11262).